A 430-amino-acid chain; its full sequence is Centrosomal protein CEP57L1 (430 aa).

Phosphoserine is present on S45. A coiled-coil region spans residues P46–A213. 2 disordered regions span residues C248 to F290 and R362 to Q430. Composition is skewed to basic and acidic residues over residues L249–P272, R362–R372, and L421–Q430. The stretch at F290–S377 forms a coiled coil.

This sequence belongs to the translokin family.

Its subcellular location is the cytoplasm. The protein localises to the cytoskeleton. The protein resides in the microtubule organizing center. It localises to the centrosome. Its function is as follows. Centrosomal protein which may be required for microtubule attachment to centrosomes. This chain is Centrosomal protein CEP57L1 (Cep57l1), found in Rattus norvegicus (Rat).